The primary structure comprises 310 residues: Malate dehydrogenase (310 aa).

NAD(+)-binding positions include 7–12 and D32; that span reads GAGNVG. Residues R81 and R87 each coordinate substrate. Residues N94 and 117 to 119 contribute to the NAD(+) site; that span reads VSN. Residues N119 and R150 each contribute to the substrate site. H174 (proton acceptor) is an active-site residue.

The protein belongs to the LDH/MDH superfamily. MDH type 3 family.

The catalysed reaction is (S)-malate + NAD(+) = oxaloacetate + NADH + H(+). In terms of biological role, catalyzes the reversible oxidation of malate to oxaloacetate. The protein is Malate dehydrogenase of Chlorobium phaeobacteroides (strain DSM 266 / SMG 266 / 2430).